We begin with the raw amino-acid sequence, 175 residues long: COMPASS component SDC1 (175 aa).

A compositionally biased stretch (polar residues) spans 1–12; it reads MNESENSPQHNE. The segment at 1–45 is disordered; that stretch reads MNESENSPQHNEVTVPMVEDTSSNADIPMEQIQREDNKNYDKHDN. Residues 32-45 show a composition bias toward basic and acidic residues; the sequence is IQREDNKNYDKHDN. Positions 121-162 are DPY-30; it reads QTRKYLNTNVTPHLLAGMRLIAVQQPEDPLRVLGEYLIEQSN.

Belongs to the dpy-30 family. Component of the Set1C/COMPASS complex which consists of SET1(2), BRE2(2), SPP1(2), SDC1(1), SHG1(1), SWD1(1), SWD2(1), and SWD3(1). Interacts directly with BRE2.

The protein localises to the nucleus. Its function is as follows. Component of the Set1C/COMPASS complex that specifically mono-, di- and trimethylates histone H3 to form H3K4me1/2/3, which subsequently plays a role in telomere length maintenance and transcription elongation regulation. COMPASS recognizes ubiquitinated H2B on one face of the nucleosome which stimulates the methylation of H3 on the opposing face. The sequence is that of COMPASS component SDC1 from Saccharomyces cerevisiae (strain ATCC 204508 / S288c) (Baker's yeast).